The primary structure comprises 1483 residues: Mediator of RNA polymerase II transcription subunit 26 (1483 aa).

Residues 8–85 (ELTTHLSQAL…KKWREMVGIQ (78 aa)) enclose the TFIIS N-terminal domain. 3 positions are modified to phosphoserine: serine 204, serine 258, and serine 421. Disordered stretches follow at residues 227–278 (SDSD…GQVA), 414–438 (HEYL…SKGV), 480–518 (VSMQ…SMNS), 541–575 (TDSD…SIQS), and 989–1041 (DKSS…MKRR). Residues 426-435 (PKRRGRKKGS) are compositionally biased toward basic residues. The span at 480 to 495 (VSMQSSASNLSNSSTN) shows a compositional bias: low complexity. The segment covering 496–518 (RDLPSHTTFPRQTSSCSDTSMNS) has biased composition (polar residues). Phosphothreonine is present on threonine 541. Residues 550-564 (PSHDSNKSQEIKECT) are compositionally biased toward basic and acidic residues. Serine 551 bears the Phosphoserine mark. Composition is skewed to polar residues over residues 565–575 (SLDSNSNSIQS) and 989–999 (DKSSNTGCQGN). The span at 1000-1011 (SPYSSSSSSSYS) shows a compositional bias: low complexity. Residues 1020–1033 (ITKNLQNKNIQLNS) show a composition bias toward polar residues. Serine 1177 is subject to Phosphoserine. Threonine 1179 bears the Phosphothreonine mark.

It belongs to the Mediator complex subunit 26 family. As to quaternary structure, component of the Mediator complex. Interacts with MED6 and MED17.

It localises to the nucleus. Functionally, component of the Mediator complex, a coactivator involved in the regulated transcription of nearly all RNA polymerase II-dependent genes. Mediator functions as a bridge to convey information from gene-specific regulatory proteins to the basal RNA polymerase II transcription machinery. Mediator is recruited to promoters by direct interactions with regulatory proteins and serves as a scaffold for the assembly of a functional preinitiation complex with RNA polymerase II and the general transcription factors. Required for activated transcription of the MtnA gene. The protein is Mediator of RNA polymerase II transcription subunit 26 (MED26) of Drosophila melanogaster (Fruit fly).